The following is a 145-amino-acid chain: Putative transcriptional regulatory protein PYRAB13000 (145 aa).

The protein belongs to the Tfx family.

Functionally, putative transcriptional regulator. This is Putative transcriptional regulatory protein PYRAB13000 from Pyrococcus abyssi (strain GE5 / Orsay).